The primary structure comprises 904 residues: Pantothenate kinase 2 (904 aa).

The disordered stretch occupies residues 1–56 (MAANNNSDPILDEGGGGGVKHEAVGEAGEGKGGGGGAAATQAPAAMLPRSGSRPQL). The tract at residues 1 to 472 (MAANNNSDPI…LGDLNEKISW (472 aa)) is pantothenate kinase. The 4'-phosphopantetheine phosphatase stretch occupies residues 473–904 (MEKFVQKGTQ…DCICKFEPVP (432 aa)). Mn(2+) contacts are provided by D735, N736, and D771. Residues 855-859 (EGMGR) carry the Subfamily II EGMGR motif motif.

The protein in the N-terminal section; belongs to the type II pantothenate kinase family. This sequence in the C-terminal section; belongs to the damage-control phosphatase family. Phosphopantetheine phosphatase II subfamily. It depends on Mn(2+) as a cofactor. Requires Ni(2+) as cofactor.

It carries out the reaction (R)-pantothenate + ATP = (R)-4'-phosphopantothenate + ADP + H(+). It catalyses the reaction (R)-4'-phosphopantothenate + H2O = (R)-pantothenate + phosphate. The catalysed reaction is (R)-4'-phosphopantetheine + H2O = (R)-pantetheine + phosphate. The enzyme catalyses (R)-4'-phosphopantetheine sulfonate + H2O = (R)-pantetheine sulfonate + phosphate. Its pathway is cofactor biosynthesis; coenzyme A biosynthesis; CoA from (R)-pantothenate: step 1/5. In terms of biological role, catalyzes the phosphorylation of pantothenate the first step in CoA biosynthesis. May play a role in the physiological regulation of the intracellular CoA concentration. Functionally redudant with PANK1. The phosphatase activity shows preference for normal or oxidatively damaged intermediates of 4'-phosphopantetheine, which provides strong indirect evidence that the phosphatase activity pre-empts damage in the CoA pathway. Hydrolyzing excess 4'-phosphopantetheine could constitute a directed overflow mechanism to prevent its oxidation to the S-sulfonate, sulfonate, or other forms. Hydrolyzing 4'-phosphopantetheine sulfonate or S-sulfonate would forestall their conversion to inactive forms of CoA and acyl carrier protein. The protein is Pantothenate kinase 2 of Oryza sativa subsp. japonica (Rice).